The sequence spans 106 residues: MSPLSEYALRMSRLSARIFGEVARSTDSKSMKVVSLFSEQPLAKKKETYDWYPNHNTYFALMGNLRFLGLYRDEHQDFKDEQRRLKKLRGKGKPRKGEGKRATKKK.

The residue at position 2 (S2) is an N-acetylserine. The interval 81 to 106 (EQRRLKKLRGKGKPRKGEGKRATKKK) is disordered. Residues 84-94 (RLKKLRGKGKP) show a composition bias toward basic residues. Residues 95–106 (RKGEGKRATKKK) are compositionally biased toward basic and acidic residues.

This sequence belongs to the mitochondrion-specific ribosomal protein mS33 family. Component of the mitochondrial ribosome small subunit (28S) which comprises a 12S rRNA and about 30 distinct proteins.

It is found in the mitochondrion. The protein is Small ribosomal subunit protein mS33 (Mrps33) of Mus musculus (Mouse).